The sequence spans 28 residues: Gamma-conotoxin-like de7a (28 aa).

Intrachain disulfides connect Cys-2–Cys-18, Cys-9–Cys-22, and Cys-17–Cys-27. Pro-4 is subject to 4-hydroxyproline. 2 positions are modified to 4-carboxyglutamate: Glu-13 and Glu-16. Position 28 is a serine amide (Ser-28).

It belongs to the conotoxin O1 superfamily. Expressed by the venom duct.

It is found in the secreted. Gamma-conotoxins may act on voltage-gated non-specific cation pacemaker channels (HCN). The chain is Gamma-conotoxin-like de7a from Conasprella delessertii (Sozon's cone).